The sequence spans 291 residues: ATP synthase gamma chain (291 aa).

It belongs to the ATPase gamma chain family. As to quaternary structure, F-type ATPases have 2 components, CF(1) - the catalytic core - and CF(0) - the membrane proton channel. CF(1) has five subunits: alpha(3), beta(3), gamma(1), delta(1), epsilon(1). CF(0) has three main subunits: a, b and c.

It is found in the cell membrane. In terms of biological role, produces ATP from ADP in the presence of a proton gradient across the membrane. The gamma chain is believed to be important in regulating ATPase activity and the flow of protons through the CF(0) complex. The chain is ATP synthase gamma chain from Lachnoclostridium phytofermentans (strain ATCC 700394 / DSM 18823 / ISDg) (Clostridium phytofermentans).